Reading from the N-terminus, the 121-residue chain is Small ribosomal subunit protein uS13 (121 aa).

Residues 92–121 (HKAGLPVRGQKTHSNARTRKGPRLTKIKKR) are disordered. Over residues 101-121 (QKTHSNARTRKGPRLTKIKKR) the composition is skewed to basic residues.

It belongs to the universal ribosomal protein uS13 family. As to quaternary structure, part of the 30S ribosomal subunit. Forms a loose heterodimer with protein S19. Forms two bridges to the 50S subunit in the 70S ribosome.

Located at the top of the head of the 30S subunit, it contacts several helices of the 16S rRNA. In the 70S ribosome it contacts the 23S rRNA (bridge B1a) and protein L5 of the 50S subunit (bridge B1b), connecting the 2 subunits; these bridges are implicated in subunit movement. Contacts the tRNAs in the A and P-sites. This is Small ribosomal subunit protein uS13 from Petrotoga mobilis (strain DSM 10674 / SJ95).